The following is a 435-amino-acid chain: tRNA-2-methylthio-N(6)-dimethylallyladenosine synthase (435 aa).

The MTTase N-terminal domain occupies 1 to 117; that stretch reads MKYFIKTYGC…MPKLLEDVKV (117 aa). Cys10, Cys46, Cys80, Cys156, Cys160, and Cys163 together coordinate [4Fe-4S] cluster. The region spanning 142-370 is the Radical SAM core domain; the sequence is RDNSYCAYVT…LEIQKAITSK (229 aa). One can recognise a TRAM domain in the interval 373–433; it reads QRYKNTVQKV…FQSLDGVVQN (61 aa).

Belongs to the methylthiotransferase family. MiaB subfamily. As to quaternary structure, monomer. Requires [4Fe-4S] cluster as cofactor.

It is found in the cytoplasm. The catalysed reaction is N(6)-dimethylallyladenosine(37) in tRNA + (sulfur carrier)-SH + AH2 + 2 S-adenosyl-L-methionine = 2-methylsulfanyl-N(6)-dimethylallyladenosine(37) in tRNA + (sulfur carrier)-H + 5'-deoxyadenosine + L-methionine + A + S-adenosyl-L-homocysteine + 2 H(+). Functionally, catalyzes the methylthiolation of N6-(dimethylallyl)adenosine (i(6)A), leading to the formation of 2-methylthio-N6-(dimethylallyl)adenosine (ms(2)i(6)A) at position 37 in tRNAs that read codons beginning with uridine. This is tRNA-2-methylthio-N(6)-dimethylallyladenosine synthase from Hydrogenobaculum sp. (strain Y04AAS1).